Reading from the N-terminus, the 406-residue chain is MERWPWPSGGAWLLVAARALIQLLRADLRLGRPLLAALALLAALDWLCQSLLPPSAALAVLAAAGWIALSRLARPQRLPVATRAVLITGCDSGFGKETAKKLDAMGFTVLATVLEMNGPGALELRACCSPRLKLLQMDLTKPADISRALEFTKAHTTSTGLWGLVNNAGHNDVVADVELSPVATFRNCMEVNFFGALELTKGLLPLLHHSRGRIVTLGSPAGEMPYPCLAAYGTSKAAMALLMDAFSCELLPWGVKVSVIQPGCFKTESVSNVSHWEQRKQLLLANLPGELRQAYGEDYIEHLHREFLHSLRLALPDLSPVVDAITDALLAARPRPRYYPGRGLGLMYFIHYYLPEGLRRRFLQSFFIIPCLPRALRPGQPGATPAPDTAQDNPNPNPDPSLVGAR.

82-111 (TRAVLITGCDSGFGKETAKKLDAMGFTVLA) provides a ligand contact to NAD(+). Ser-219 provides a ligand contact to substrate. Tyr-232 serves as the catalytic Proton acceptor. The segment at 379–406 (GQPGATPAPDTAQDNPNPNPDPSLVGAR) is disordered.

It belongs to the short-chain dehydrogenases/reductases (SDR) family. Interacts with ligand-free cytoplasmic NR3C2. In terms of tissue distribution, highly expressed in the kidney.

The protein localises to the microsome. The protein resides in the endoplasmic reticulum. The enzyme catalyses an 11beta-hydroxysteroid + NAD(+) = an 11-oxosteroid + NADH + H(+). It catalyses the reaction corticosterone + NAD(+) = 11-dehydrocorticosterone + NADH + H(+). The catalysed reaction is cortisol + NAD(+) = cortisone + NADH + H(+). It carries out the reaction 11beta,17beta-dihydroxyandrost-4-ene-3-one + NAD(+) = 17beta-hydroxyandrost-4-ene-3,11-dione + NADH + H(+). The enzyme catalyses 11beta-hydroxyandrost-4-ene-3,17-dione + NAD(+) = androst-4-ene-3,11,17-trione + NADH + H(+). It participates in steroid metabolism. Its activity is regulated as follows. Inhibited by carbenoloxone. In terms of biological role, catalyzes the conversion of biologically active 11beta-hydroxyglucocorticoids (11beta-hydroxysteroid) such as corticosterone, to inactive 11-ketoglucocorticoids (11-oxosteroid) such as 11-dehydrocorticosterone, in the presence of NAD(+). Functions as a dehydrogenase (oxidase), thereby decreasing the concentration of active glucocorticoids, thus protecting the nonselective mineralocorticoid receptor from occupation by glucocorticoids. Plays an important role in maintaining glucocorticoids balance during preimplantation and protects the fetus from excessive maternal corticosterone exposure. Catalyzes the oxidation of 11beta-hydroxytestosterone (11beta,17beta-dihydroxyandrost-4-ene-3-one) to 11-ketotestosterone (17beta-hydroxyandrost-4-ene-3,11-dione), a major bioactive androgen. Catalyzes the conversion of 11beta-hydroxyandrostenedione (11beta-hydroxyandrost-4-ene-3,17-dione) to 11-ketoandrostenedione (androst-4-ene-3,11,17-trione), which can be further metabolized to 11-ketotestosterone. Converts 7-beta-25-dihydroxycholesterol to 7-oxo-25-hydroxycholesterol in vitro. 7-beta-25-dihydroxycholesterol (not 7-oxo-25-hydroxycholesterol) acts as a ligand for the G-protein-coupled receptor (GPCR) Epstein-Barr virus-induced gene 2 (EBI2) and may thereby regulate immune cell migration. May protect ovulating oocytes and fertilizing spermatozoa from the adverse effects of cortisol. The chain is 11-beta-hydroxysteroid dehydrogenase type 2 (HSD11B2) from Oryctolagus cuniculus (Rabbit).